Consider the following 418-residue polypeptide: Putative ion-transport protein YfeO (418 aa).

The next 12 helical transmembrane spans lie at 10–30, 54–74, 99–119, 120–140, 149–169, 186–206, 223–243, 258–278, 300–320, 322–342, 343–363, and 371–391; these read LLLS…LIVV, DSPL…GLVI, ALPG…SLGP, EHPI…RLLP, ILAS…AALI, LFAP…FFHP, ILSG…AVWC, VLVL…GGPV, DYFL…ASGF, GGRI…LHEH, VPAV…VLVV, and LFMA…CIVM.

Belongs to the chloride channel (TC 2.A.49) family.

It is found in the cell membrane. The polypeptide is Putative ion-transport protein YfeO (Shigella boydii serotype 4 (strain Sb227)).